The primary structure comprises 242 residues: DNA repair protein RecO (242 aa).

This sequence belongs to the RecO family.

In terms of biological role, involved in DNA repair and RecF pathway recombination. This chain is DNA repair protein RecO, found in Methylococcus capsulatus (strain ATCC 33009 / NCIMB 11132 / Bath).